The primary structure comprises 210 residues: Orotate phosphoribosyltransferase (210 aa).

5-phospho-alpha-D-ribose 1-diphosphate is bound by residues arginine 94, lysine 98, histidine 100, and 120-128; that span reads EDLISTGGS. Residue serine 124 coordinates orotate.

It belongs to the purine/pyrimidine phosphoribosyltransferase family. PyrE subfamily. Homodimer. The cofactor is Mg(2+).

The catalysed reaction is orotidine 5'-phosphate + diphosphate = orotate + 5-phospho-alpha-D-ribose 1-diphosphate. It participates in pyrimidine metabolism; UMP biosynthesis via de novo pathway; UMP from orotate: step 1/2. Functionally, catalyzes the transfer of a ribosyl phosphate group from 5-phosphoribose 1-diphosphate to orotate, leading to the formation of orotidine monophosphate (OMP). In Bacillus cereus (strain G9842), this protein is Orotate phosphoribosyltransferase.